The following is a 61-amino-acid chain: Small ribosomal subunit protein uS14 (61 aa).

Zn(2+) is bound by residues Cys24, Cys27, Cys40, and Cys43.

Belongs to the universal ribosomal protein uS14 family. Zinc-binding uS14 subfamily. As to quaternary structure, part of the 30S ribosomal subunit. Contacts proteins S3 and S10. Requires Zn(2+) as cofactor.

Functionally, binds 16S rRNA, required for the assembly of 30S particles and may also be responsible for determining the conformation of the 16S rRNA at the A site. The protein is Small ribosomal subunit protein uS14 of Thermotoga neapolitana (strain ATCC 49049 / DSM 4359 / NBRC 107923 / NS-E).